The following is a 495-amino-acid chain: Glutamyl-tRNA(Gln) amidotransferase subunit A (495 aa).

Active-site charge relay system residues include Lys-75 and Ser-150. The active-site Acyl-ester intermediate is Ser-174.

Belongs to the amidase family. GatA subfamily. In terms of assembly, heterotrimer of A, B and C subunits.

It carries out the reaction L-glutamyl-tRNA(Gln) + L-glutamine + ATP + H2O = L-glutaminyl-tRNA(Gln) + L-glutamate + ADP + phosphate + H(+). Functionally, allows the formation of correctly charged Gln-tRNA(Gln) through the transamidation of misacylated Glu-tRNA(Gln) in organisms which lack glutaminyl-tRNA synthetase. The reaction takes place in the presence of glutamine and ATP through an activated gamma-phospho-Glu-tRNA(Gln). The protein is Glutamyl-tRNA(Gln) amidotransferase subunit A of Ralstonia nicotianae (strain ATCC BAA-1114 / GMI1000) (Ralstonia solanacearum).